A 407-amino-acid polypeptide reads, in one-letter code: Serine/threonine-protein kinase GRIK2 (407 aa).

The interval 21-64 is disordered; it reads SGSRNQQSPKPYDDDTHSCDSDVTSTARGEEEEDEEEVEQKSRS. Basic and acidic residues predominate over residues 31-40; the sequence is PYDDDTHSCD. The region spanning 107–370 is the Protein kinase domain; that stretch reads YVRVCKIGSG…LKNVSEHPWV (264 aa). Residues 113 to 121 and K136 each bind ATP; that span reads IGSGSYGKV. Residue T153 is modified to Phosphothreonine; by autocatalysis. The active-site Proton acceptor is D238. S260 bears the Phosphoserine; by KIN10 mark.

The protein belongs to the protein kinase superfamily. Ser/Thr protein kinase family. Associates with the SNF1-related protein kinase (SnRK) complex. Interacts with AL1, a geminivirus (TGMV) protein essential for viral replication. Expressed in shoot apical meristem, leaf primordium and emerging petiole (at protein level).

It catalyses the reaction L-seryl-[protein] + ATP = O-phospho-L-seryl-[protein] + ADP + H(+). The catalysed reaction is L-threonyl-[protein] + ATP = O-phospho-L-threonyl-[protein] + ADP + H(+). With respect to regulation, activated when autophosphorylated at Thr-153 and inactivated when phosphorylated at Ser-260 by SnRK1.1/KIN10. Its function is as follows. Activates SnRK1.1/KIN10 and SnRK1.2/KIN11 by phosphorylation of their activation-loop 'Thr-198' and 'Thr-176', respectively. Required for the regulation by SnRK1 kinases of the transcription of a large set of genes, the modification the activity of metabolic enzymes, and the control of various nutrient-responsive cellular developmental processes. This is Serine/threonine-protein kinase GRIK2 (GRIK2) from Arabidopsis thaliana (Mouse-ear cress).